A 216-amino-acid polypeptide reads, in one-letter code: UDP-N-acetylglucosamine transferase subunit ALG14 (216 aa).

At 1–3 (MVC) the chain is on the lumenal side. A helical membrane pass occupies residues 4–24 (VLVLAAAAGAVAVFLILRIWV). Topologically, residues 25–216 (VLRSMDVTPR…PKSVYLGRIV (192 aa)) are cytoplasmic.

Belongs to the ALG14 family. In terms of assembly, forms with ALG13 the active heterodimeric UDP-N-acetylglucosamine transferase complex.

The protein localises to the endoplasmic reticulum membrane. Its function is as follows. Part of the UDP-N-acetylglucosamine transferase complex that operates in the biosynthetic pathway of dolichol-linked oligosaccharides, the glycan precursors employed in protein asparagine (N)-glycosylation. The assembly of dolichol-linked oligosaccharides begins on the cytosolic side of the endoplasmic reticulum membrane and finishes in its lumen. The sequential addition of sugars to dolichol pyrophosphate produces dolichol-linked oligosaccharides containing fourteen sugars, including two GlcNAcs, nine mannoses and three glucoses. Once assembled, the oligosaccharides are transferred from the lipid to nascent proteins by oligosaccharyltransferases. Functions as a protein-membrane adapter recruiting ALG13 at the cytoplasmic face of the endoplasmic reticulum, where the complex catalyzes the second step of dolichol pyrophosphate biosynthesis, transferring a beta1,4-linked N-acetylglucosamine (GlcNAc) from UDP-GlcNAc to GlcNAc-pyrophosphatedolichol (Gn-PDol) to produce N,N'-diacetylchitobiosyl diphosphodolichol. N,N'-diacetylchitobiosyl diphosphodolichol is a substrate for ALG1, the following enzyme in the biosynthetic pathway. This Homo sapiens (Human) protein is UDP-N-acetylglucosamine transferase subunit ALG14.